A 720-amino-acid chain; its full sequence is Putative glutamine--fructose-6-phosphate aminotransferase [isomerizing] (720 aa).

Cys-2 functions as the Nucleophile; for GATase activity in the catalytic mechanism. Residues Cys-2–Gly-321 form the Glutamine amidotransferase type-2 domain. Positions Ser-266–Pro-280 are enriched in polar residues. The segment at Ser-266–Leu-285 is disordered. SIS domains lie at Trp-393–Ser-532 and Cys-565–Pro-710.

The enzyme catalyses D-fructose 6-phosphate + L-glutamine = D-glucosamine 6-phosphate + L-glutamate. It functions in the pathway nucleotide-sugar biosynthesis; UDP-N-acetyl-alpha-D-glucosamine biosynthesis; alpha-D-glucosamine 6-phosphate from D-fructose 6-phosphate: step 1/1. Its function is as follows. Involved in amino sugar synthesis (formation of chitin, supplies the amino sugars of asparagine-linked oligosaccharides of glycoproteins). The sequence is that of Putative glutamine--fructose-6-phosphate aminotransferase [isomerizing] from Saccharomyces cerevisiae (strain JAY291) (Baker's yeast).